The primary structure comprises 259 residues: Small ribosomal subunit protein eS1 (259 aa).

Positions 1 to 18 (MAVGKNKRISKGKKGGKK) are enriched in basic residues. Residues 1–22 (MAVGKNKRISKGKKGGKKKASD) are disordered.

It belongs to the eukaryotic ribosomal protein eS1 family. Component of the small ribosomal subunit. Mature ribosomes consist of a small (40S) and a large (60S) subunit. The 40S subunit contains about 33 different proteins and 1 molecule of RNA (18S). The 60S subunit contains about 49 different proteins and 3 molecules of RNA (25S, 5.8S and 5S).

It is found in the cytoplasm. The chain is Small ribosomal subunit protein eS1 from Chlamydomonas reinhardtii (Chlamydomonas smithii).